Consider the following 436-residue polypeptide: GTPase Obg (436 aa).

An Obg domain is found at 1–159 (MAFVDQATIE…LKVKLELRVL (159 aa)). The OBG-type G domain occupies 160–335 (ADVGLVGFPS…LLLKVADLLD (176 aa)). Residues 166–173 (GFPSAGKS), 191–195 (FTTID), 213–216 (DLPG), 285–288 (TKMD), and 316–318 (SSV) each bind GTP. Mg(2+) is bound by residues Ser173 and Thr193. Residues 357–436 (KDDHQSTDFQ…GADFAFEFEE (80 aa)) form the OCT domain.

It belongs to the TRAFAC class OBG-HflX-like GTPase superfamily. OBG GTPase family. As to quaternary structure, monomer. Mg(2+) serves as cofactor.

The protein localises to the cytoplasm. In terms of biological role, an essential GTPase which binds GTP, GDP and possibly (p)ppGpp with moderate affinity, with high nucleotide exchange rates and a fairly low GTP hydrolysis rate. Plays a role in control of the cell cycle, stress response, ribosome biogenesis and in those bacteria that undergo differentiation, in morphogenesis control. This is GTPase Obg from Oenococcus oeni (strain ATCC BAA-331 / PSU-1).